Here is a 541-residue protein sequence, read N- to C-terminus: Phosphoenolpyruvate carboxykinase (ATP) (541 aa).

3 residues coordinate substrate: R67, Y207, and K213. ATP contacts are provided by residues K213, H232, and 248–256; that span reads GLSGTGKTT. Residues K213 and H232 each contribute to the Mn(2+) site. Mn(2+) is bound at residue D269. ATP is bound by residues E297, R333, 449-450, and T455; that span reads RI. R333 provides a ligand contact to substrate.

It belongs to the phosphoenolpyruvate carboxykinase (ATP) family. In terms of assembly, monomer. It depends on Mn(2+) as a cofactor.

The protein resides in the cytoplasm. The catalysed reaction is oxaloacetate + ATP = phosphoenolpyruvate + ADP + CO2. The protein operates within carbohydrate biosynthesis; gluconeogenesis. Its function is as follows. Involved in the gluconeogenesis. Catalyzes the conversion of oxaloacetate (OAA) to phosphoenolpyruvate (PEP) through direct phosphoryl transfer between the nucleoside triphosphate and OAA. The sequence is that of Phosphoenolpyruvate carboxykinase (ATP) from Aliivibrio salmonicida (strain LFI1238) (Vibrio salmonicida (strain LFI1238)).